The sequence spans 368 residues: tRNA-specific 2-thiouridylase MnmA (368 aa).

ATP contacts are provided by residues 11 to 18 (GMSGGVDS) and methionine 37. An interaction with target base in tRNA region spans residues 97-99 (NPD). The active-site Nucleophile is cysteine 102. An intrachain disulfide couples cysteine 102 to cysteine 199. Glycine 127 is an ATP binding site. The segment at 149-151 (KDQ) is interaction with tRNA. The Cysteine persulfide intermediate role is filled by cysteine 199. The tract at residues 311-312 (RY) is interaction with tRNA.

This sequence belongs to the MnmA/TRMU family. In terms of assembly, interacts with TusE.

Its subcellular location is the cytoplasm. It catalyses the reaction S-sulfanyl-L-cysteinyl-[protein] + uridine(34) in tRNA + AH2 + ATP = 2-thiouridine(34) in tRNA + L-cysteinyl-[protein] + A + AMP + diphosphate + H(+). Catalyzes the 2-thiolation of uridine at the wobble position (U34) of tRNA(Lys), tRNA(Glu) and tRNA(Gln), leading to the formation of s(2)U34, the first step of tRNA-mnm(5)s(2)U34 synthesis. Sulfur is provided by IscS, via a sulfur-relay system. Binds ATP and its substrate tRNAs. The polypeptide is tRNA-specific 2-thiouridylase MnmA (Citrobacter koseri (strain ATCC BAA-895 / CDC 4225-83 / SGSC4696)).